The primary structure comprises 212 residues: 3-isopropylmalate dehydratase small subunit (212 aa).

It belongs to the LeuD family. LeuD type 1 subfamily. Heterodimer of LeuC and LeuD.

It catalyses the reaction (2R,3S)-3-isopropylmalate = (2S)-2-isopropylmalate. It functions in the pathway amino-acid biosynthesis; L-leucine biosynthesis; L-leucine from 3-methyl-2-oxobutanoate: step 2/4. In terms of biological role, catalyzes the isomerization between 2-isopropylmalate and 3-isopropylmalate, via the formation of 2-isopropylmaleate. This Thiobacillus denitrificans (strain ATCC 25259 / T1) protein is 3-isopropylmalate dehydratase small subunit.